A 515-amino-acid chain; its full sequence is Sugar transport protein MST4 (515 aa).

Topologically, residues 1 to 17 (MAGGFSVSGSGVEFEAK) are cytoplasmic. The chain crosses the membrane as a helical span at residues 18 to 38 (ITPIVIISCIMAATGGLMFGY). The Extracellular portion of the chain corresponds to 39–78 (DVGISGGVTSMDDFLREFFPTVLKKKHEDKESNYCKYDNQ). Residues 79 to 99 (GLQLFTSSLYLAGLTATFFAS) form a helical membrane-spanning segment. Residues 100–108 (YTTRRLGRR) lie on the Cytoplasmic side of the membrane. A helical transmembrane segment spans residues 109–129 (LTMLIAGVFFIVGVIFNGAAQ). At 130-138 (NLAMLIVGR) the chain is on the extracellular side. A helical membrane pass occupies residues 139–159 (ILLGCGVGFANQAVPLFLSEI). At 160–165 (APTRIR) the chain is on the cytoplasmic side. A helical transmembrane segment spans residues 166 to 186 (GGLNILFQLNVTIGILFANLV). The Extracellular segment spans residues 187 to 199 (NYGTAKIHPWGWR). The helical transmembrane segment at 200 to 220 (LSLSLAGIPAALLTLGALFVV) threads the bilayer. Residues 221 to 280 (DTPNSLIERGRLEEGKAVLRKIRGTDNVEPEFNEIVEASRVAQEVKHPFRNLLQRRNRPQ) are Cytoplasmic-facing. Residues 281–301 (LVIAVLLQIFQQFTGINAIMF) traverse the membrane as a helical segment. The Extracellular segment spans residues 302–315 (YAPVLFNTLGFKTD). A helical transmembrane segment spans residues 316–336 (ASLYSAVITGAVNVLSTLVSV). At 337-347 (YSVDRVGRRML) the chain is on the cytoplasmic side. A helical membrane pass occupies residues 348–368 (LLEAGVQMFLSQVAIAVVLGI). Over 369–379 (KVTDRSDNLGH) the chain is Extracellular. A helical transmembrane segment spans residues 380–400 (GWAIMVVVMVCTFVSSFAWSW). Residues 401 to 422 (GPLGWLIPSETFPLETRSAGQS) are Cytoplasmic-facing. Residues 423–443 (VTVCVNLLFTFVIAQAFLSML) form a helical membrane-spanning segment. Over 444–448 (CHLKY) the chain is Extracellular. A helical membrane pass occupies residues 449–469 (AIFAFFSAWVVVMSLFVLFFL). Over 470 to 515 (PETKNIPIEEMTERVWKQHWFWKRFMDDADKHHVVPNGGKSNGATV) the chain is Cytoplasmic.

It belongs to the major facilitator superfamily. Sugar transporter (TC 2.A.1.1) family. Expressed in roots, shoots, leaf blades, leaf sheaths, anthers, ovaries and embryos.

It localises to the membrane. In terms of biological role, mediates active uptake of hexoses by sugar:proton symport. Can transport glucose, fructose, mannose and galactose. Can transport xylose and ribose. The polypeptide is Sugar transport protein MST4 (Oryza sativa subsp. japonica (Rice)).